Reading from the N-terminus, the 243-residue chain is MTYSIRIADLPLTERPRERLLSLGAQSLSNAELLAILLATGQGKGKLSAVGLGQHILKELSQHKRDPLDVLRDMSPQELMNIPGIGPAKATTILAAIELGKRAFQLRPMEKVEINDPVSAVAALSHDLMWQNQERFAIVLLNVKNQIIGTKLISIGTATETLVHPREIFREVLKQGATKLIIGHNHPSGNVAPSQEDIDLTEQLLKAATFLNFPLLDHLILGNGNHQSLRTVTDLWIRYPQEG.

The 124-residue stretch at 112–235 (VEINDPVSAV…HQSLRTVTDL (124 aa)) folds into the MPN domain. H184, H186, and D197 together coordinate Zn(2+). Positions 184 to 197 (HNHPSGNVAPSQED) match the JAMM motif motif.

It belongs to the UPF0758 family.

This Gloeothece citriformis (strain PCC 7424) (Cyanothece sp. (strain PCC 7424)) protein is UPF0758 protein PCC7424_2073.